Here is a 495-residue protein sequence, read N- to C-terminus: Cysteine--tRNA ligase (495 aa).

Cysteine 29 is a Zn(2+) binding site. The short motif at 31 to 41 (PTVYDYGHIGN) is the 'HIGH' region element. Zn(2+) is bound by residues cysteine 211, histidine 236, and glutamate 240. The short motif at 268–272 (KMSKS) is the 'KMSKS' region element. An ATP-binding site is contributed by lysine 271.

This sequence belongs to the class-I aminoacyl-tRNA synthetase family. As to quaternary structure, monomer. The cofactor is Zn(2+).

The protein localises to the cytoplasm. The catalysed reaction is tRNA(Cys) + L-cysteine + ATP = L-cysteinyl-tRNA(Cys) + AMP + diphosphate. In Koribacter versatilis (strain Ellin345), this protein is Cysteine--tRNA ligase.